Consider the following 95-residue polypeptide: CRISPR-associated endoribonuclease Cas2 (95 aa).

Mg(2+) is bound at residue D9.

This sequence belongs to the CRISPR-associated endoribonuclease Cas2 protein family. Homodimer, forms a heterotetramer with a Cas1 homodimer. Mg(2+) serves as cofactor.

CRISPR (clustered regularly interspaced short palindromic repeat), is an adaptive immune system that provides protection against mobile genetic elements (viruses, transposable elements and conjugative plasmids). CRISPR clusters contain sequences complementary to antecedent mobile elements and target invading nucleic acids. CRISPR clusters are transcribed and processed into CRISPR RNA (crRNA). Functions as a ssRNA-specific endoribonuclease. Involved in the integration of spacer DNA into the CRISPR cassette. This chain is CRISPR-associated endoribonuclease Cas2, found in Methylorubrum extorquens (strain CM4 / NCIMB 13688) (Methylobacterium extorquens).